We begin with the raw amino-acid sequence, 319 residues long: Sulfate adenylyltransferase subunit 2 (319 aa).

Belongs to the PAPS reductase family. CysD subfamily. Heterodimer composed of CysD, the smaller subunit, and CysN.

It carries out the reaction sulfate + ATP + H(+) = adenosine 5'-phosphosulfate + diphosphate. The protein operates within sulfur metabolism; hydrogen sulfide biosynthesis; sulfite from sulfate: step 1/3. In terms of biological role, with CysN forms the ATP sulfurylase (ATPS) that catalyzes the adenylation of sulfate producing adenosine 5'-phosphosulfate (APS) and diphosphate, the first enzymatic step in sulfur assimilation pathway. APS synthesis involves the formation of a high-energy phosphoric-sulfuric acid anhydride bond driven by GTP hydrolysis by CysN coupled to ATP hydrolysis by CysD. In Methylobacterium radiotolerans (strain ATCC 27329 / DSM 1819 / JCM 2831 / NBRC 15690 / NCIMB 10815 / 0-1), this protein is Sulfate adenylyltransferase subunit 2.